The primary structure comprises 142 residues: Transcription antitermination protein NusB (142 aa).

The protein belongs to the NusB family.

Functionally, involved in transcription antitermination. Required for transcription of ribosomal RNA (rRNA) genes. Binds specifically to the boxA antiterminator sequence of the ribosomal RNA (rrn) operons. This is Transcription antitermination protein NusB from Trichlorobacter lovleyi (strain ATCC BAA-1151 / DSM 17278 / SZ) (Geobacter lovleyi).